A 235-amino-acid chain; its full sequence is Iron-sulfur cluster co-chaperone protein HscB (235 aa).

Residues Cys-41, Cys-44, Cys-58, and Cys-61 each contribute to the a divalent metal cation site. One can recognise a J domain in the interval 72-144; that stretch reads DYFSLMDCNR…LSRGLYLLKL (73 aa).

Belongs to the HscB family. Interacts with ISCU and HSPA9 to form an iron-sulfur transfer complex. Interacts with SDHAF1 (via the first LYR motif); the interaction recruits the iron-sulfur transfer complex composed of HSC20, HSPA9 and ISCU and mediates the incorporation of iron-sulfur clusters into SDHB which also interacts with HSC20. Interacts with the cytoplasmic form of ISCU and with CIA complex member CIAO1 (via LYR motif). In terms of assembly, homodimer. Interacts with ISCU (cytoplasmic form); this interaction stabilizes the (Fe-S) clusters on ISCU. Interacts with the CIA complex member CIAO1 (via LYR motif). In terms of tissue distribution, expressed in lung, brain, stomach, spleen, ovary, testis, liver, muscle and heart.

It is found in the cytoplasm. The protein resides in the mitochondrion. Its pathway is cofactor biosynthesis; iron-sulfur cluster biosynthesis. Its function is as follows. Acts as a co-chaperone in iron-sulfur cluster assembly in mitochondria. Required for incorporation of iron-sulfur clusters into SDHB, the iron-sulfur protein subunit of succinate dehydrogenase that is involved in complex II of the mitochondrial electron transport chain. Recruited to SDHB by interaction with SDHAF1 which first binds SDHB and then recruits the iron-sulfur transfer complex formed by HSC20, HSPA9 and ISCU through direct binding to HSC20. Plays an essential role in hematopoiesis. In terms of biological role, acts as a co-chaperone in iron-sulfur cluster assembly in the cytoplasm. Also mediates complex formation between components of the cytosolic iron-sulfur biogenesis pathway and the CIA targeting complex composed of CIAO1, DIPK1B/FAM69B and MMS19 by binding directly to the scaffold protein ISCU and to CIAO1. This facilitates iron-sulfur cluster insertion into a number of cytoplasmic and nuclear proteins including POLD1, ELP3, DPYD and PPAT. The polypeptide is Iron-sulfur cluster co-chaperone protein HscB (Homo sapiens (Human)).